A 607-amino-acid polypeptide reads, in one-letter code: UvrABC system protein C (607 aa).

A GIY-YIG domain is found at 16–94; the sequence is GRPGVYRMFD…IKEWRPPYNI (79 aa). The UVR domain maps to 203 to 238; sequence NALSDELNASMEKAAMALDFERAAELRDQVALLRRV.

The protein belongs to the UvrC family. As to quaternary structure, interacts with UvrB in an incision complex.

The protein resides in the cytoplasm. The UvrABC repair system catalyzes the recognition and processing of DNA lesions. UvrC both incises the 5' and 3' sides of the lesion. The N-terminal half is responsible for the 3' incision and the C-terminal half is responsible for the 5' incision. This chain is UvrABC system protein C, found in Pseudomonas syringae pv. tomato (strain ATCC BAA-871 / DC3000).